The following is a 264-amino-acid chain: MAIRHFRRQREQVTSGSSSDTETSDVSEQDTGAGEGPTEAETRAEGAEQGAWERAPSVAGSEAGESDEDDSESSSSDDEEVVLHRPVFLKKRDPGAGPAARTGAVSGAQERTLDQVQHHNAVQDKERALKQIATSYSTDKELLHRIAQLETDGDTDSDSERREHELWAQRRHQRMLRLREEERRRQSELEENEAARLTNSALPMDDAGIQTAGGAERGTRPASSSDARKRRGPEAKFKPSKVQKPQLKRTASPSRADENEFSIL.

2 disordered regions span residues 1 to 109 and 178 to 264; these read MAIR…SGAQ and LREE…FSIL. A compositionally biased stretch (acidic residues) spans 64–80; it reads GESDEDDSESSSSDDEE. The segment covering 178 to 188 has biased composition (basic and acidic residues); the sequence is LREEERRRQSE.

This sequence belongs to the SPP381 family. Component of the 25S U4/U6.U5 tri-snRNP particle, a subcomplex of the spliceosome.

It is found in the nucleus. Functionally, component of the spliceosome and rRNA processing machinery. In association with the spliceosomal U4/U6.U5 tri-snRNP particle, required for splicing of pre-mRNA. This is Pre-mRNA-splicing factor SPP381 (SPP381) from Eremothecium gossypii (strain ATCC 10895 / CBS 109.51 / FGSC 9923 / NRRL Y-1056) (Yeast).